The primary structure comprises 385 residues: Probable caffeine synthase MTL1 (385 aa).

The S-adenosyl-L-homocysteine site is built by tyrosine 18, cysteine 62, asparagine 67, aspartate 101, leucine 102, serine 140, and phenylalanine 141. The caffeine site is built by tyrosine 158, glutamine 161, and phenylalanine 162. Asparagine 179 provides a ligand contact to Mg(2+). Residue threonine 238 participates in caffeine binding. Positions 261, 263, and 264 each coordinate Mg(2+). Caffeine is bound at residue tyrosine 369.

This sequence belongs to the methyltransferase superfamily. Type-7 methyltransferase family. Mg(2+) is required as a cofactor.

The protein operates within alkaloid biosynthesis. May be involved in the biosynthesis of caffeine. This is Probable caffeine synthase MTL1 from Coffea canephora (Robusta coffee).